A 317-amino-acid polypeptide reads, in one-letter code: Hairy/enhancer-of-split related with YRPW motif protein 1 (317 aa).

The tract at residues 1 to 59 (MKRNHDFSSSDSELDENIEVEKESADENAGANSPLGSMSPSTTSQVQARKRRRGIIEKR) is disordered. The segment covering 30 to 47 (GANSPLGSMSPSTTSQVQ) has biased composition (polar residues). The 56-residue stretch at 48 to 103 (ARKRRRGIIEKRRRDRINNSLSELRRLVPSAFEKQGSAKLEKAEILQMTVDHLKML) folds into the bHLH domain. The Orange domain maps to 121-157 (YRGLGFRECLAETARYLSIIEGLDNTDPLRIRLVSHL). Low complexity-rich tracts occupy residues 193 to 226 (QQQQQQGAPLARSTSSPPSSNSSSPSSSSPSAPS) and 248 to 264 (PPSTSLPPGLTPPTASK). Positions 193–264 (QQQQQQGAPL…PGLTPPTASK (72 aa)) are disordered. A YRPW motif motif is present at residues 307–310 (YRPW).

Belongs to the HEY family.

The protein resides in the nucleus. In terms of biological role, transcriptional repressor which functions as a downstream effector of Notch signaling. The polypeptide is Hairy/enhancer-of-split related with YRPW motif protein 1 (hey1) (Danio rerio (Zebrafish)).